The chain runs to 48 residues: MDEKQRYDAGMQVRRAVLGDAHVDRCLEKLNDFNGEFQEMITRHACGD.

This sequence belongs to the carboxymuconolactone decarboxylase family.

The enzyme catalyses (R)-2-(carboxymethyl)-5-oxo-2,5-dihydro-2-furoate + H(+) = (4,5-dihydro-5-oxofuran-2-yl)-acetate + CO2. The protein operates within aromatic compound metabolism; beta-ketoadipate pathway; 5-oxo-4,5-dihydro-2-furylacetate from 3-carboxy-cis,cis-muconate: step 2/2. In Pseudomonas putida (Arthrobacter siderocapsulatus), this protein is 4-carboxymuconolactone decarboxylase.